The primary structure comprises 142 residues: Large ribosomal subunit protein uL11 (142 aa).

The protein belongs to the universal ribosomal protein uL11 family. As to quaternary structure, part of the ribosomal stalk of the 50S ribosomal subunit. Interacts with L10 and the large rRNA to form the base of the stalk. L10 forms an elongated spine to which L12 dimers bind in a sequential fashion forming a multimeric L10(L12)X complex. In terms of processing, one or more lysine residues are methylated.

In terms of biological role, forms part of the ribosomal stalk which helps the ribosome interact with GTP-bound translation factors. In Vibrio vulnificus (strain YJ016), this protein is Large ribosomal subunit protein uL11.